Reading from the N-terminus, the 475-residue chain is MYLTILFLFVSSILLSLMFLLRKHLSHFSYQNLPPGKTGFPLIGESLSFLSEGRQGRPEKFVTDRVRRFISSSTGVFKTHLFGYPTAVMTGASGNKFLFTNENKLVVSWWPDSVKKIFPYTQSTYTDESKKLRILLMQFMKPEALRKYIGVMDEVAQRHFETLWTNQKQLIVYPLSKKLTFSVACRLFLSMDDPERVSKLEDRFNSVVTGIYSVPIDLPGTRFNRSIKASRLLRKEVCAIIGQRREELKAGRASAEQDVLSHMLMSVGETKDEDLANYLIGILIGGHDTAAIATTFIINYLAEYPHVYQRVLQEQKEILKEKKEEERLKWEDIEKMKYSWNVACEVMRLVPPLTGNFREAIDHFTFKGFYIPKGWKLYWSATATHMNPDYFPEPERFEPNRFEGSGPKPYSYIPFGGGPRMCPGREFARLEILVIIHNLVNRFKWEKVFPNENKIVVDPLPKPGNGLPIRIFPHF.

Residues tyrosine 2–arginine 22 traverse the membrane as a helical segment. Residue cysteine 422 coordinates heme.

It belongs to the cytochrome P450 family. Heme serves as cofactor.

Its subcellular location is the membrane. It catalyses the reaction beta-amyrin + 3 reduced [NADPH--hemoprotein reductase] + 3 O2 = oleanolate + 3 oxidized [NADPH--hemoprotein reductase] + 4 H2O + 4 H(+). Its function is as follows. Catalyzes the oxidation of the methyl group to a carboxyl group at the C-28 position of beta-amyrin to form oleanolate. This chain is Beta-amyrin 28-monooxygenase, found in Barbarea vulgaris (Yellow rocket).